A 158-amino-acid polypeptide reads, in one-letter code: MPDMANVESFDLDHTKVKAPYVRLAGVKTTPKGDQISKYDLRFLQPNQGAIDPAAIHTLEHLLAGYMRDHLEGVVDVSPMGCRTGMYMAVIGEPDEQGVMKAFEAALKDTAGHDQPIPGVSELECGNYRDHDLAAARQHARDVLDQGLKVQETILLER.

Fe cation contacts are provided by histidine 57, histidine 61, and cysteine 125.

This sequence belongs to the LuxS family. As to quaternary structure, homodimer. Requires Fe cation as cofactor.

It carries out the reaction S-(5-deoxy-D-ribos-5-yl)-L-homocysteine = (S)-4,5-dihydroxypentane-2,3-dione + L-homocysteine. Functionally, involved in the synthesis of autoinducer 2 (AI-2) which is secreted by bacteria and is used to communicate both the cell density and the metabolic potential of the environment. The regulation of gene expression in response to changes in cell density is called quorum sensing. Catalyzes the transformation of S-ribosylhomocysteine (RHC) to homocysteine (HC) and 4,5-dihydroxy-2,3-pentadione (DPD). The polypeptide is S-ribosylhomocysteine lyase (Deinococcus radiodurans (strain ATCC 13939 / DSM 20539 / JCM 16871 / CCUG 27074 / LMG 4051 / NBRC 15346 / NCIMB 9279 / VKM B-1422 / R1)).